A 217-amino-acid polypeptide reads, in one-letter code: ATP phosphoribosyltransferase (217 aa).

This sequence belongs to the ATP phosphoribosyltransferase family. Short subfamily. As to quaternary structure, heteromultimer composed of HisG and HisZ subunits.

Its subcellular location is the cytoplasm. The catalysed reaction is 1-(5-phospho-beta-D-ribosyl)-ATP + diphosphate = 5-phospho-alpha-D-ribose 1-diphosphate + ATP. It functions in the pathway amino-acid biosynthesis; L-histidine biosynthesis; L-histidine from 5-phospho-alpha-D-ribose 1-diphosphate: step 1/9. In terms of biological role, catalyzes the condensation of ATP and 5-phosphoribose 1-diphosphate to form N'-(5'-phosphoribosyl)-ATP (PR-ATP). Has a crucial role in the pathway because the rate of histidine biosynthesis seems to be controlled primarily by regulation of HisG enzymatic activity. The sequence is that of ATP phosphoribosyltransferase from Burkholderia lata (strain ATCC 17760 / DSM 23089 / LMG 22485 / NCIMB 9086 / R18194 / 383).